A 91-amino-acid chain; its full sequence is Small ribosomal subunit protein uS19 (91 aa).

Belongs to the universal ribosomal protein uS19 family.

Its function is as follows. Protein S19 forms a complex with S13 that binds strongly to the 16S ribosomal RNA. The protein is Small ribosomal subunit protein uS19 of Halorhodospira halophila (strain DSM 244 / SL1) (Ectothiorhodospira halophila (strain DSM 244 / SL1)).